The chain runs to 357 residues: Peptide chain release factor 1 (357 aa).

Glutamine 234 is modified (N5-methylglutamine).

It belongs to the prokaryotic/mitochondrial release factor family. Methylated by PrmC. Methylation increases the termination efficiency of RF1.

The protein resides in the cytoplasm. In terms of biological role, peptide chain release factor 1 directs the termination of translation in response to the peptide chain termination codons UAG and UAA. This is Peptide chain release factor 1 from Arthrobacter sp. (strain FB24).